Reading from the N-terminus, the 389-residue chain is Oxysterol-binding protein 1 (389 aa).

Coiled-coil stretches lie at residues 1 to 31 (MGKK…NKPA) and 340 to 371 (KDDV…DEWK). The interval 1–43 (MGKKDKNVSVEEEVDEAEIEKLAAENANKPAPQLTKEDLDAMD) is disordered.

It belongs to the OSBP family. Interacts with dstC.

It localises to the cytoplasm. May play a role in the regulation of the slug-fruiting body switch. This chain is Oxysterol-binding protein 1 (osbA), found in Dictyostelium discoideum (Social amoeba).